The sequence spans 299 residues: MERLVEKAEILMEALPFITKFRGKTFVIKYGGNAMAKADLKVAFAQDILMLKYIGINPVIVHGGGPQIGQMLKRMGLESKFVGGLRVTDRETMEVVEMVLGGLVNKSIVMLINRYAGGHIRAVGLTGKDGGLIRAKKLDAQEYFRQMGDFRPTELLDLGHVGEVEYIDTQILKHLEEDNYIPVIAPVGFDTEGNAYNINADFVASAVAGALKAEKVIFLTDIEGLKDEQGNTVSSINVERINRMIEEGVIKGGMIPKVKACIQALSQGVKKAHILDGRIPHCVLLEIFTSEGIGTEIVS.

Residues 64-65 (GG), Arg86, and Asn197 each bind substrate.

Belongs to the acetylglutamate kinase family. ArgB subfamily.

The protein resides in the cytoplasm. It carries out the reaction N-acetyl-L-glutamate + ATP = N-acetyl-L-glutamyl 5-phosphate + ADP. It functions in the pathway amino-acid biosynthesis; L-arginine biosynthesis; N(2)-acetyl-L-ornithine from L-glutamate: step 2/4. Functionally, catalyzes the ATP-dependent phosphorylation of N-acetyl-L-glutamate. The chain is Acetylglutamate kinase from Persephonella marina (strain DSM 14350 / EX-H1).